The following is a 393-amino-acid chain: Acetylornithine aminotransferase (393 aa).

Pyridoxal 5'-phosphate-binding positions include 100-101 (GA) and phenylalanine 133. Position 136 (arginine 136) interacts with N(2)-acetyl-L-ornithine. 218-221 (DEVQ) is a pyridoxal 5'-phosphate binding site. N6-(pyridoxal phosphate)lysine is present on lysine 247. Serine 274 is a binding site for N(2)-acetyl-L-ornithine. Threonine 275 contributes to the pyridoxal 5'-phosphate binding site.

It belongs to the class-III pyridoxal-phosphate-dependent aminotransferase family. ArgD subfamily. Homodimer. The cofactor is pyridoxal 5'-phosphate.

It localises to the cytoplasm. It catalyses the reaction N(2)-acetyl-L-ornithine + 2-oxoglutarate = N-acetyl-L-glutamate 5-semialdehyde + L-glutamate. It functions in the pathway amino-acid biosynthesis; L-arginine biosynthesis; N(2)-acetyl-L-ornithine from L-glutamate: step 4/4. The sequence is that of Acetylornithine aminotransferase from Caldanaerobacter subterraneus subsp. tengcongensis (strain DSM 15242 / JCM 11007 / NBRC 100824 / MB4) (Thermoanaerobacter tengcongensis).